We begin with the raw amino-acid sequence, 207 residues long: Large ribosomal subunit protein uL3 (207 aa).

It belongs to the universal ribosomal protein uL3 family. Part of the 50S ribosomal subunit. Forms a cluster with proteins L14 and L19.

In terms of biological role, one of the primary rRNA binding proteins, it binds directly near the 3'-end of the 23S rRNA, where it nucleates assembly of the 50S subunit. This is Large ribosomal subunit protein uL3 from Fervidobacterium nodosum (strain ATCC 35602 / DSM 5306 / Rt17-B1).